Consider the following 1220-residue polypeptide: Myosin-2 (1220 aa).

Positions 1–12 (MMLSASPNTLAK) are enriched in polar residues. Disordered regions lie at residues 1 to 54 (MMLS…ARRS) and 68 to 95 (QNGSVVSVTPAVEAESERKEEGVKRKEK). The span at 20 to 33 (ESLRQKDECDRPKD) shows a compositional bias: basic and acidic residues. A compositionally biased stretch (low complexity) spans 40–54 (SRPNSRARLPSARRS). A compositionally biased stretch (basic and acidic residues) spans 82–95 (ESERKEEGVKRKEK). The region spanning 160–209 (KKKLRVWCRVSNGQWQLGKIQSTSADTSLVMLSTANVVKVSTEELFPANP) is the Myosin N-terminal SH3-like domain. In terms of domain architecture, Myosin motor spans 213–879 (EGVEDLIQLS…QIGIFEDRRK (667 aa)). ATP-binding positions include 304–311 (GESGAGKT) and 353–361 (NANSSRFGK). 2 actin-binding regions span residues 638–672 (LIEKKPIGLLSLLDEESNFPKATDLTFANKLKQHL) and 759–781 (LFKLMNKLENTSPHFIRCIKPNS). 3 consecutive IQ domains span residues 881–910 (VLQGIVGLQKHFRGHLSRAYFQNMRKVTLV), 904–933 (MRKVTLVLQSYIRGENARRLFDTEAKFHAD), and 942–971 (ELSAVIHLQSAVRGWLARKHFNSMQRQKEL). Disordered stretches follow at residues 968–1007 (QKELRNVATKSKRKAGRRISEDKDIPLEQPQVQPTSMSDL) and 1075–1118 (SITG…NGNT). 2 stretches are compositionally biased toward polar residues: residues 997-1006 (PQVQPTSMSD) and 1098-1118 (TMSTGTPGVRTPTNKFTNGNT). Residues 1003-1071 (SMSDLQKRIL…MSLAAARKSL (69 aa)) are a coiled coil.

It belongs to the TRAFAC class myosin-kinesin ATPase superfamily. Myosin family. Plant myosin class VIII subfamily. As to quaternary structure, homodimer. In terms of tissue distribution, expressed in flowers, leaves and roots.

The protein resides in the cell junction. It localises to the plasmodesma. It is found in the endosome. Myosin heavy chain that is required for the cell cycle-regulated transport of various organelles and proteins for their segregation. Functions by binding with its tail domain to receptor proteins on organelles and exerting force with its N-terminal motor domain against actin filaments, thereby transporting its cargo along polarized actin cables. Involved in endocytosis via its action in endosomal trafficking. The chain is Myosin-2 (VIII-2) from Arabidopsis thaliana (Mouse-ear cress).